The primary structure comprises 272 residues: Cyclase-like protein 2 (272 aa).

Positions 1-24 (MAVPPLFFLLTLLSLPSLLISAGA) are cleaved as a signal peptide.

The protein belongs to the Cyclase 1 superfamily.

It localises to the secreted. It is found in the extracellular space. Its subcellular location is the extracellular matrix. In terms of biological role, may function redundantly with CYCLASE1 for normal plant growth, development and viability. This chain is Cyclase-like protein 2, found in Arabidopsis thaliana (Mouse-ear cress).